Here is a 204-residue protein sequence, read N- to C-terminus: LexA repressor (204 aa).

A DNA-binding region (H-T-H motif) is located at residues 27–47; that stretch reads VREIGEAVGLASSSTVHGHLA. Catalysis depends on for autocatalytic cleavage activity residues Ser-126 and Lys-164.

This sequence belongs to the peptidase S24 family. Homodimer.

The catalysed reaction is Hydrolysis of Ala-|-Gly bond in repressor LexA.. In terms of biological role, represses a number of genes involved in the response to DNA damage (SOS response), including recA and lexA. In the presence of single-stranded DNA, RecA interacts with LexA causing an autocatalytic cleavage which disrupts the DNA-binding part of LexA, leading to derepression of the SOS regulon and eventually DNA repair. The protein is LexA repressor of Listeria monocytogenes serotype 4b (strain CLIP80459).